Consider the following 337-residue polypeptide: MVEVERVRYSDTLEREKIRAMIKARKEKQKEQTVENEKAVCPECGSRNLVHDYERAELVCGDCGLVIDADFVDEGPEWRAFDHDQRMKRSRVGAPMTYTIHDKGLSTMIDWRNRDSYGKSISSKNRAQLYRLRKWQRRIRVSNATERNLAFALSELDRMASALGLPRTVRETAAVVYRKAVDKNLIRGRSIEGVAAAALYAACRQCSVPRTLDEIEEVSRVSRKEIGRTYRFISRELALKLMPTSPIDYVPRFCSGLNLKGEVQSKSVEILRQASEKELTSGRGPTGVAAAAIYIASILCGERRTQREVADVAGVTEVTIRNRYKELAEELDIEIIL.

Residues 37-68 (EKAVCPECGSRNLVHDYERAELVCGDCGLVID) form a TFIIB-type zinc finger. 4 residues coordinate Zn(2+): Cys41, Cys44, Cys60, and Cys63. 2 repeat units span residues 154-237 (SELD…SREL) and 248-329 (DYVP…ELAE).

This sequence belongs to the TFIIB family.

Functionally, stabilizes TBP binding to an archaeal box-A promoter. Also responsible for recruiting RNA polymerase II to the pre-initiation complex (DNA-TBP-TFIIB). The protein is Transcription initiation factor IIB of Methanosarcina mazei (Methanosarcina frisia).